We begin with the raw amino-acid sequence, 961 residues long: Lon protease homolog, mitochondrial (961 aa).

Residues 1-67 (MAGGTGCVRL…SPAAAGHWRG (67 aa)) constitute a mitochondrion transit peptide. 2 disordered regions span residues 76–103 (GGGA…GSAG) and 220–262 (QLEV…VVVG). A Lon N-terminal domain is found at 125-371 (LPLIAVTRNP…KALSLLKKEF (247 aa)). Residues 235–244 (KLRKKPKRGK) are compositionally biased toward basic residues. A compositionally biased stretch (basic and acidic residues) spans 245 to 257 (KEAEEDGATKRPL). 524 to 531 (GPPGVGKT) provides a ligand contact to ATP. The Lon proteolytic domain occupies 760-951 (VTPPGVVMGL…REIFDIAFPE (192 aa)). The segment covering 784 to 801 (SLRRPRDRDSDKGDKDGS) has biased composition (basic and acidic residues). The disordered stretch occupies residues 784–803 (SLRRPRDRDSDKGDKDGSLE). Active-site residues include Ser857 and Lys900.

This sequence belongs to the peptidase S16 family. Homohexamer. Organized in a ring with a central cavity. The ATP-binding and proteolytic domains (AP-domain) form a hexameric chamber, while the N-terminal domain is arranged as a trimer of dimers. DNA and RNA binding is stimulated by substrate and inhibited by ATP binding. Interacts with TWNK and mitochondrial DNA polymerase subunit POLG.

It is found in the mitochondrion matrix. It carries out the reaction Hydrolysis of proteins in presence of ATP.. ATP-dependent serine protease that mediates the selective degradation of misfolded, unassembled or oxidatively damaged polypeptides as well as certain short-lived regulatory proteins in the mitochondrial matrix. Endogenous substrates include mitochondrial steroidogenic acute regulatory (StAR) protein, DELE1, helicase Twinkle (TWNK) and the large ribosomal subunit protein MRPL32/bL32m. MRPL32/bL32m is protected from degradation by LONP1 when it is bound to a nucleic acid (RNA), but TWNK is not. May also have a chaperone function in the assembly of inner membrane protein complexes. Participates in the regulation of mitochondrial gene expression and in the maintenance of the integrity of the mitochondrial genome. Binds to mitochondrial promoters and RNA in a single-stranded, site-specific, and strand-specific manner. May regulate mitochondrial DNA replication and/or gene expression using site-specific, single-stranded DNA binding to target the degradation of regulatory proteins binding to adjacent sites in mitochondrial promoters. The polypeptide is Lon protease homolog, mitochondrial (Bos taurus (Bovine)).